We begin with the raw amino-acid sequence, 234 residues long: Small ribosomal subunit protein uS2 (234 aa).

Belongs to the universal ribosomal protein uS2 family.

The polypeptide is Small ribosomal subunit protein uS2 (Prochlorococcus marinus subsp. pastoris (strain CCMP1986 / NIES-2087 / MED4)).